Here is a 341-residue protein sequence, read N- to C-terminus: Glucokinase (341 aa).

An ATP-binding site is contributed by 18 to 23 (GDIGGT).

Belongs to the bacterial glucokinase family.

It is found in the cytoplasm. It catalyses the reaction D-glucose + ATP = D-glucose 6-phosphate + ADP + H(+). The chain is Glucokinase from Rhizobium etli (strain ATCC 51251 / DSM 11541 / JCM 21823 / NBRC 15573 / CFN 42).